Here is an 868-residue protein sequence, read N- to C-terminus: DNA mismatch repair protein MutS (868 aa).

623 to 630 (GPNMAGKS) is a binding site for ATP.

Belongs to the DNA mismatch repair MutS family.

Its function is as follows. This protein is involved in the repair of mismatches in DNA. It is possible that it carries out the mismatch recognition step. This protein has a weak ATPase activity. In Magnetococcus marinus (strain ATCC BAA-1437 / JCM 17883 / MC-1), this protein is DNA mismatch repair protein MutS.